Consider the following 160-residue polypeptide: Phosphopantetheine adenylyltransferase (160 aa).

Serine 8 is a binding site for substrate. Residues 8 to 9 (SF) and histidine 16 each bind ATP. The substrate site is built by lysine 40, leucine 74, and lysine 88. ATP-binding positions include 89-91 (GLR), glutamate 99, and 124-130 (YSFVSST).

It belongs to the bacterial CoaD family. Homohexamer. Requires Mg(2+) as cofactor.

The protein resides in the cytoplasm. It carries out the reaction (R)-4'-phosphopantetheine + ATP + H(+) = 3'-dephospho-CoA + diphosphate. The protein operates within cofactor biosynthesis; coenzyme A biosynthesis; CoA from (R)-pantothenate: step 4/5. Functionally, reversibly transfers an adenylyl group from ATP to 4'-phosphopantetheine, yielding dephospho-CoA (dPCoA) and pyrophosphate. The polypeptide is Phosphopantetheine adenylyltransferase (Thermus thermophilus (strain ATCC BAA-163 / DSM 7039 / HB27)).